The sequence spans 237 residues: Ribosomal RNA small subunit methyltransferase G (237 aa).

S-adenosyl-L-methionine contacts are provided by residues glycine 76, phenylalanine 81, 128–129, and arginine 147; that span reads IE.

The protein belongs to the methyltransferase superfamily. RNA methyltransferase RsmG family.

The protein localises to the cytoplasm. In terms of biological role, specifically methylates the N7 position of a guanine in 16S rRNA. This chain is Ribosomal RNA small subunit methyltransferase G, found in Prochlorococcus marinus (strain MIT 9301).